The chain runs to 254 residues: MLAKRIIPCLDVTAGRVVKGVNFLGLRDAGDPVEIARRYNEQGADELTFLDITASSDQRDIILHVIEAVADQVFIPLTVGGGVRSIADIRRLLNAGADKVSINTAAVTHPEFVQQASEHFGNQCIVVALDAKAVTPENDRWEIFTHGGRNRTGLDAVEWARKMQQLGAGEILLTSMDRDGTKAGFNLPLTRAVSDAVNIPVIASGGVGNLQHLVDGVKEGHADAVLAASIFHFGEYTVDQAKQAMRAAGIEVRL.

Catalysis depends on residues D11 and D130.

The protein belongs to the HisA/HisF family. In terms of assembly, heterodimer of HisH and HisF.

It localises to the cytoplasm. The enzyme catalyses 5-[(5-phospho-1-deoxy-D-ribulos-1-ylimino)methylamino]-1-(5-phospho-beta-D-ribosyl)imidazole-4-carboxamide + L-glutamine = D-erythro-1-(imidazol-4-yl)glycerol 3-phosphate + 5-amino-1-(5-phospho-beta-D-ribosyl)imidazole-4-carboxamide + L-glutamate + H(+). Its pathway is amino-acid biosynthesis; L-histidine biosynthesis; L-histidine from 5-phospho-alpha-D-ribose 1-diphosphate: step 5/9. Its function is as follows. IGPS catalyzes the conversion of PRFAR and glutamine to IGP, AICAR and glutamate. The HisF subunit catalyzes the cyclization activity that produces IGP and AICAR from PRFAR using the ammonia provided by the HisH subunit. The sequence is that of Imidazole glycerol phosphate synthase subunit HisF from Chromobacterium violaceum (strain ATCC 12472 / DSM 30191 / JCM 1249 / CCUG 213 / NBRC 12614 / NCIMB 9131 / NCTC 9757 / MK).